We begin with the raw amino-acid sequence, 120 residues long: Probable early E4 13 kDa protein (120 aa).

The chain is Probable early E4 13 kDa protein from Human adenovirus A serotype 12 (HAdV-12).